We begin with the raw amino-acid sequence, 899 residues long: Origin recognition complex subunit 5 (899 aa).

Disordered stretches follow at residues 27–47 (FSSPKKSRKESPIFVQNNDDT), 100–166 (DRIN…EYKD), and 194–238 (KNLE…DGNL). The span at 105-160 (SEEETNINDDNNDDNNGDYDDDNNSDDDDDNDDNNNNDDNNNDDDEDVDDFEDIKE) shows a compositional bias: acidic residues. The segment covering 207 to 218 (SSDNSMTSSSEE) has biased composition (low complexity). The span at 227–237 (ESDKESDKDGN) shows a compositional bias: basic and acidic residues. 303-310 (GLPGMGKT) is a binding site for ATP. A disordered region spans residues 409–469 (KRTTENIRSP…NNNSNNVRFN (61 aa)). Low complexity predominate over residues 455 to 469 (KNNFNNNNSNNVRFN).

This sequence belongs to the ORC5 family. As to quaternary structure, component of the origin recognition complex (ORC). Interacts with PCNA1; the interaction occurs during the trophozoite stage but not at the late schizont stage.

The protein resides in the nucleus. The enzyme catalyses ATP + H2O = ADP + phosphate + H(+). Functionally, component of the origin recognition complex (ORC) that binds origins of replication. This Plasmodium falciparum (isolate 3D7) protein is Origin recognition complex subunit 5.